A 120-amino-acid polypeptide reads, in one-letter code: Large ribosomal subunit protein uL29 (120 aa).

The protein belongs to the universal ribosomal protein uL29 family. In terms of assembly, component of the large ribosomal subunit. Mature ribosomes consist of a small (40S) and a large (60S) subunit. The 40S subunit contains about 32 different proteins and 1 molecule of RNA (18S). The 60S subunit contains 45 different proteins and 3 molecules of RNA (25S, 5.8S and 5S).

The protein resides in the cytoplasm. Its function is as follows. Component of the ribosome, a large ribonucleoprotein complex responsible for the synthesis of proteins in the cell. The small ribosomal subunit (SSU) binds messenger RNAs (mRNAs) and translates the encoded message by selecting cognate aminoacyl-transfer RNA (tRNA) molecules. The large subunit (LSU) contains the ribosomal catalytic site termed the peptidyl transferase center (PTC), which catalyzes the formation of peptide bonds, thereby polymerizing the amino acids delivered by tRNAs into a polypeptide chain. The nascent polypeptides leave the ribosome through a tunnel in the LSU and interact with protein factors that function in enzymatic processing, targeting, and the membrane insertion of nascent chains at the exit of the ribosomal tunnel. The sequence is that of Large ribosomal subunit protein uL29 from Candida albicans (strain SC5314 / ATCC MYA-2876) (Yeast).